Here is a 493-residue protein sequence, read N- to C-terminus: Transmembrane protein 184 homolog DDB_G0284525 (493 aa).

Polar residues predominate over residues 1–10; it reads MTQESSSSNH. Residues 1-25 are disordered; the sequence is MTQESSSSNHYVDESSFDNNNNNNN. 7 helical membrane-spanning segments follow: residues 46-66, 87-107, 119-139, 180-200, 212-232, 254-274, and 293-313; these read VPAL…ATIL, IVRI…SLLL, DCYE…YGGG, YVLV…FGLY, FYNA…VVLF, IVVF…NFGW, and FLIC…FPYE. N-linked (GlcNAc...) asparagine glycans are attached at residues Asn415 and Asn416.

Belongs to the TMEM184 family.

It is found in the cell membrane. Functionally, probable transporter. The protein is Transmembrane protein 184 homolog DDB_G0284525 (tmem184A) of Dictyostelium discoideum (Social amoeba).